Reading from the N-terminus, the 203-residue chain is 5-formyltetrahydrofolate cyclo-ligase (203 aa).

A2 carries the post-translational modification N-acetylalanine. Residues 10–14 (KRGLR) and R14 each bind ATP. Residues L56, E61, and 148–152 (RGKGY) contribute to the substrate site. 145 to 153 (RLGRGKGYY) is an ATP binding site. Mg(2+)-binding residues include D154 and D189.

Belongs to the 5-formyltetrahydrofolate cyclo-ligase family. As to quaternary structure, monomer. Mg(2+) serves as cofactor.

The protein resides in the cytoplasm. The catalysed reaction is (6S)-5-formyl-5,6,7,8-tetrahydrofolate + ATP = (6R)-5,10-methenyltetrahydrofolate + ADP + phosphate. In terms of biological role, contributes to tetrahydrofolate metabolism. Helps regulate carbon flow through the folate-dependent one-carbon metabolic network that supplies carbon for the biosynthesis of purines, thymidine and amino acids. Catalyzes the irreversible conversion of 5-formyltetrahydrofolate (5-CHO-H(4)PteGlu) to yield 5,10-methenyltetrahydrofolate. This is 5-formyltetrahydrofolate cyclo-ligase (Mthfs) from Mus musculus (Mouse).